A 187-amino-acid polypeptide reads, in one-letter code: UPF0232 protein MMAR_0004 (187 aa).

Disordered stretches follow at residues 1-77 (MSDD…QPLG) and 166-187 (ASPS…DTYG). A compositionally biased stretch (basic and acidic residues) spans 14-30 (AARDELSGMDLVRRTLA). Residues 31–55 (EARAAARARGQDPGRGFAAGPAPRR) are compositionally biased toward low complexity.

Belongs to the UPF0232 family.

The sequence is that of UPF0232 protein MMAR_0004 from Mycobacterium marinum (strain ATCC BAA-535 / M).